Reading from the N-terminus, the 639-residue chain is Versicolorin B synthase stcN (639 aa).

An N-terminal signal peptide occupies residues 1–19; it reads MPAWSLLVLSALPVVGMFA. Residues 77 to 78 and 98 to 99 each bind FAD; these read TA and EA. N-linked (GlcNAc...) asparagine glycosylation occurs at N109. 164–167 is an FAD binding site; the sequence is GAML. The N-linked (GlcNAc...) asparagine glycan is linked to N214. The 39-residue stretch at 263–301 folds into the PAS domain; the sequence is GFSNGQLLGRSYITHTIHPKTRRRDTASTSYLQTALRTS. N-linked (GlcNAc...) asparagine glycosylation is found at N444 and N501. FAD-binding positions include A609 and 620–621; that span reads PM.

The protein belongs to the GMC oxidoreductase family. Homodimer. FAD serves as cofactor.

The protein resides in the cytoplasm. It is found in the cytosol. It catalyses the reaction (2S-3S)-versiconal hemiacetal = versicolorin B + H2O. It carries out the reaction (S)-5'-oxoaverantin + H(+) = (1'S,5'S)-averufin + H2O. The protein operates within mycotoxin biosynthesis; sterigmatocystin biosynthesis. Its function is as follows. Norsolorinic acid reductase; part of the gene cluster that mediates the biosynthesis of sterigmatocystin (ST), a polyketide-derived furanocoumarin which is part of the most toxic and carcinogenic compounds among the known mycotoxins. The first step in the biosynthesis of sterigmatocystin is the production of hexanoate by the fatty acid synthase (FAS) units stcJ and stcK. The polyketide backbone is assembled by the non-reducing polyketide synthase stcA by condensation of the starter hexanoyl-CoA and 7 malonyl-CoA extender units followed by cyclization and release of norsolorinic acid. Norsolorinic acid is the first stable intermediate in the biosynthesis of sterigmatocystin and is converted into averantin (AVN) by the ketoreductase stcE which reduces the hexanoate ketone to an alcohol. Averantin is then oxidized into 5'-hydroxyaverantin (HAVN) by the cytochrome P450 monooxygenase stcF. 5'-hydroxyaverantin is further converted to 5'-oxyaverantin (OAVN) by the 5'-hydroxyaverantin dehydrogenase stcG. The next step is the conversion of OAVN into averufin (AVF) which is catalyzed by a yet to be identified enzyme. The cytochrome P450 monooxygenase stcB and the flavin-binding monooxygenase stcW are both required for the conversion of averufin to 1-hydroxyversicolorone. The esterase stcI probably catalyzes the formation of versiconal hemiacetal acetate from 1-hydroxyversicolorone. The oxydoreductase stcN then probably catalyzes the biosynthetic step from versiconal to versicolorin B (VERB). The next step is performed by the versicolorin B desaturase stcL to produce versicolorin A (VERA). The ketoreductase stcU and the cytochrome P450 monooxygenase stcS are involved in the conversion of versicolorin A to demethylsterigmatocystin. The Baeyer-Villiger oxidas stcQ and the reductase stcR might be involved in the biosynthetic step from versicolorin A to demethylsterigmatocystin. The final step in the biosynthesis of sterigmatocystin is the methylation of demethylsterigmatocystin catalyzed by the methyltransferase stcP. This is Versicolorin B synthase stcN from Emericella nidulans (strain FGSC A4 / ATCC 38163 / CBS 112.46 / NRRL 194 / M139) (Aspergillus nidulans).